Reading from the N-terminus, the 400-residue chain is S-adenosylmethionine synthase (400 aa).

136 to 141 (GTGSTD) lines the ATP pocket.

The protein belongs to the AdoMet synthase 2 family. Mg(2+) is required as a cofactor.

The enzyme catalyses L-methionine + ATP + H2O = S-adenosyl-L-methionine + phosphate + diphosphate. It functions in the pathway amino-acid biosynthesis; S-adenosyl-L-methionine biosynthesis; S-adenosyl-L-methionine from L-methionine: step 1/1. In terms of biological role, catalyzes the formation of S-adenosylmethionine from methionine and ATP. This is S-adenosylmethionine synthase from Methanoregula boonei (strain DSM 21154 / JCM 14090 / 6A8).